Reading from the N-terminus, the 436-residue chain is AP-2 complex subunit mu-B (436 aa).

One can recognise an MHD domain in the interval 170–435 (RNELFLDVLE…IGRSGIYETR (266 aa)). A 1,2-diacyl-sn-glycero-3-phospho-(1D-myo-inositol-3,4,5-trisphosphate)-binding residues include Lys342, Lys346, and Lys355.

This sequence belongs to the adaptor complexes medium subunit family. Adaptor protein complex 2 (AP-2) is a heterotetramer composed of two large adaptins (alpha-type subunit and beta-type subunit), a medium adaptin (mu-type subunit) and a small adaptin (sigma-type subunit).

Its subcellular location is the cell membrane. The protein localises to the membrane. The protein resides in the coated pit. Functionally, component of the adaptor complexes which link clathrin to receptors in coated vesicles. Clathrin-associated protein complexes are believed to interact with the cytoplasmic tails of membrane proteins, leading to their selection and concentration. AP50 is a subunit of the plasma membrane adaptor. The complex binds polyphosphoinositide-containing lipids. This chain is AP-2 complex subunit mu-B (ap2m1b), found in Danio rerio (Zebrafish).